The sequence spans 199 residues: NADH-ubiquinone oxidoreductase chain 6 (199 aa).

5 helical membrane passes run 1–21 (MILFYVFVVLALVSGAMVIRA), 27–47 (SVLFLILVFCNTSGLLVLLGL), 49–69 (FFAMIFLVVYVGAIAVLFLFV), 87–107 (YLPVGGIIGLIFLLEIFLMVD), and 150–170 (FFLFLVSSLILLVALIGAIVL).

The protein belongs to the complex I subunit 6 family.

Its subcellular location is the mitochondrion membrane. The enzyme catalyses a ubiquinone + NADH + 5 H(+)(in) = a ubiquinol + NAD(+) + 4 H(+)(out). Functionally, core subunit of the mitochondrial membrane respiratory chain NADH dehydrogenase (Complex I) that is believed to belong to the minimal assembly required for catalysis. Complex I functions in the transfer of electrons from NADH to the respiratory chain. The immediate electron acceptor for the enzyme is believed to be ubiquinone. This chain is NADH-ubiquinone oxidoreductase chain 6 (ND6), found in Marchantia polymorpha (Common liverwort).